Reading from the N-terminus, the 461-residue chain is O-methyltransferase CTB2 (461 aa).

Asp288 serves as a coordination point for S-adenosyl-L-methionine. Residue His339 is the Proton acceptor of the active site.

This sequence belongs to the class I-like SAM-binding methyltransferase superfamily. Cation-independent O-methyltransferase family. COMT subfamily.

The protein operates within mycotoxin biosynthesis. O-methyltransferase; part of the gene cluster that mediates the biosynthesis of cercosporin, a light-activated, non-host-selective toxin. The perylenequinone chromophore of cercosporin absorbs light energy to attain an electronically-activated triplet state and produces active oxygen species such as the hydroxyl radical, superoxide, hydrogen peroxide or singlet oxygen upon reaction with oxygen molecules. These reactive oxygen species cause damage to various cellular components including lipids, proteins and nucleic acids. The first step of cercosporin biosynthesis is performed by the polyketide synthase CTB1 which catalyzes the formation of nor-toralactone. The starter unit acyltransferase (SAT) domain of CTB1 initiates polyketide extension by the selective utilization of acetyl-CoA, which is elongated to the heptaketide in the beta-ketoacyl synthase (KS) domain by successive condensations with six malonyl units introduced by the malonyl acyltransferase (MAT) domain. The product template (PT) domain catalyzes C4-C9 and C2-C11 aldol cyclizations and dehydrations to a trihydroxynaphthalene, which is thought to be delivered to the thioesterase (TE) domain for product release. The bifunctional enzyme CTB3 then methylates nor-toralactone to toralactone before conducting an unusual oxidative aromatic ring opening. The O-methyltransferase CTB2 further methylates the nascent OH-6 of the CBT3 product, blocking further oxidation at this site before the reductase CTB6 reduces the 2-oxopropyl ketone at position C7, giving naphthalene. The FAD-dependent monooxygenase CTB5 in concert with the multicopper oxidase CTB12 are responsible for homodimerization of naphthalene with CTB7 installing the dioxepine moiety, finally producing cercosporin. The fasciclin domain-containing protein CTB11 might act with CTB5 and CTB12 whereas the roles of CTB9 and CTB10 have still to be elucidated. This chain is O-methyltransferase CTB2, found in Cercospora nicotianae (Barn spot disease fungus).